A 268-amino-acid polypeptide reads, in one-letter code: Glutamate racemase (268 aa).

Substrate-binding positions include 14–15 (DS) and 46–47 (YG). Cys-78 acts as the Proton donor/acceptor in catalysis. 79–80 (NS) contributes to the substrate binding site. Cys-190 serves as the catalytic Proton donor/acceptor. Substrate is bound at residue 191 to 192 (TH).

The protein belongs to the aspartate/glutamate racemases family.

It catalyses the reaction L-glutamate = D-glutamate. Its pathway is cell wall biogenesis; peptidoglycan biosynthesis. Provides the (R)-glutamate required for cell wall biosynthesis. The protein is Glutamate racemase of Treponema pallidum (strain Nichols).